We begin with the raw amino-acid sequence, 406 residues long: Propionate kinase (406 aa).

ATP is bound by residues N11 and K18. N11 is a Mg(2+) binding site. R86 is a binding site for substrate. Residue D143 is the Proton donor/acceptor of the active site. Residues H175, 203-207 (HLGNG), 278-280 (DMR), and 326-330 (GIGEN) contribute to the ATP site.

This sequence belongs to the acetokinase family. TdcD subfamily. In terms of assembly, homodimer. Requires Mg(2+) as cofactor.

The enzyme catalyses propanoate + ATP = propanoyl phosphate + ADP. The protein operates within amino-acid degradation; L-threonine degradation via propanoate pathway; propanoate from L-threonine: step 4/4. Catalyzes the conversion of propionyl phosphate and ADP to propionate and ATP. The protein is Propionate kinase of Yersinia enterocolitica serotype O:8 / biotype 1B (strain NCTC 13174 / 8081).